A 738-amino-acid polypeptide reads, in one-letter code: Catalase-peroxidase (738 aa).

Residues 1–24 (MEPLFPKRLLSIAVLCVASATAQA) form the signal peptide. The segment at residues 104 to 226 (WHAAGTYRMI…FGATEMGLIY (123 aa)) is a cross-link (tryptophyl-tyrosyl-methioninium (Trp-Tyr) (with M-252)). His105 serves as the catalytic Proton acceptor. The interval 191-213 (EEVNWGPEGQWLTDRRHSGDRKL) is disordered. Basic and acidic residues predominate over residues 203–213 (TDRRHSGDRKL). Positions 226–252 (YVNPEGPHGNPDPIAAAHDIRQAFGRM) form a cross-link, tryptophyl-tyrosyl-methioninium (Tyr-Met) (with W-104). His267 is a binding site for heme b.

The protein belongs to the peroxidase family. Peroxidase/catalase subfamily. Homodimer or homotetramer. Heme b serves as cofactor. Post-translationally, formation of the three residue Trp-Tyr-Met cross-link is important for the catalase, but not the peroxidase activity of the enzyme.

It catalyses the reaction H2O2 + AH2 = A + 2 H2O. The catalysed reaction is 2 H2O2 = O2 + 2 H2O. Its function is as follows. Bifunctional enzyme with both catalase and broad-spectrum peroxidase activity. This Saccharophagus degradans (strain 2-40 / ATCC 43961 / DSM 17024) protein is Catalase-peroxidase.